The chain runs to 466 residues: Alpha-1A adrenergic receptor (466 aa).

The Extracellular portion of the chain corresponds to M1–K25. 2 N-linked (GlcNAc...) asparagine glycosylation sites follow: N7 and N13. Residues A26–V51 traverse the membrane as a helical segment. Over A52 to Y63 the chain is Cytoplasmic. A helical membrane pass occupies residues Y64 to L89. Residues G90–C99 are Extracellular-facing. The helical transmembrane segment at N100–I122 threads the bilayer. At D123–G143 the chain is on the cytoplasmic side. A helical membrane pass occupies residues L144–P168. Topologically, residues A169–D181 are extracellular. The chain crosses the membrane as a helical span at residues P182–C205. At R206–K272 the chain is on the cytoplasmic side. A helical membrane pass occupies residues T273–F297. Residues F298–S304 lie on the Extracellular side of the membrane. A helical transmembrane segment spans residues E305–S329. The Cytoplasmic segment spans residues S330–V466. Residues K334 to K349 carry the Nuclear localization signal motif. The S-palmitoyl cysteine moiety is linked to residue C345.

It belongs to the G-protein coupled receptor 1 family. Adrenergic receptor subfamily. ADRA1A sub-subfamily. In terms of assembly, homo- and heterooligomer. Heterooligomerizes with ADRA1B homooligomers in cardiac myocytes. Interacts with CAVIN4.

The protein localises to the nucleus membrane. It localises to the cell membrane. It is found in the cytoplasm. The protein resides in the membrane. Its subcellular location is the caveola. Its function is as follows. This alpha-adrenergic receptor mediates its action by association with G proteins that activate a phosphatidylinositol-calcium second messenger system. Its effect is mediated by G(q) and G(11) proteins. Nuclear ADRA1A-ADRA1B heterooligomers regulate phenylephrine (PE)-stimulated ERK signaling in cardiac myocytes. The protein is Alpha-1A adrenergic receptor (ADRA1A) of Cavia porcellus (Guinea pig).